A 143-amino-acid polypeptide reads, in one-letter code: MNSIQLIIDIILILWLLILTVLYLRKKSLNLNIVKNKKIVRAKRYIVFYVIAESKVKSDDLERVVRNSLKDLLGNVWLNIANPKVVTYREDTQEGIISTNRIGYKAVLASLPFAKEINGNKILIVPRRTTGSLKKAKKLIGLK.

This sequence belongs to the eukaryotic/archaeal RNase P protein component 2 family. Consists of a catalytic RNA component and at least 4-5 protein subunits.

Its subcellular location is the cytoplasm. The enzyme catalyses Endonucleolytic cleavage of RNA, removing 5'-extranucleotides from tRNA precursor.. In terms of biological role, part of ribonuclease P, a protein complex that generates mature tRNA molecules by cleaving their 5'-ends. This is Ribonuclease P protein component 2 from Saccharolobus islandicus (strain L.S.2.15 / Lassen #1) (Sulfolobus islandicus).